Reading from the N-terminus, the 181-residue chain is Oligoribonuclease (181 aa).

The Exonuclease domain occupies 8–171 (LIWIDLEMTG…DDIRESVAEL (164 aa)). Residue tyrosine 129 is part of the active site.

Belongs to the oligoribonuclease family.

Its subcellular location is the cytoplasm. Its function is as follows. 3'-to-5' exoribonuclease specific for small oligoribonucleotides. This Yersinia pseudotuberculosis serotype O:1b (strain IP 31758) protein is Oligoribonuclease.